The chain runs to 270 residues: Phosphatidylglycerol--prolipoprotein diacylglyceryl transferase (270 aa).

4 consecutive transmembrane segments (helical) span residues Phe-19–Ala-39, Leu-56–Glu-76, Gln-92–Ala-112, and Gly-116–Ile-136. Arg-138 provides a ligand contact to a 1,2-diacyl-sn-glycero-3-phospho-(1'-sn-glycerol). A run of 3 helical transmembrane segments spans residues His-178–Leu-198, Gly-206–Leu-226, and Leu-236–Val-256.

The protein belongs to the Lgt family.

The protein localises to the cell membrane. The catalysed reaction is L-cysteinyl-[prolipoprotein] + a 1,2-diacyl-sn-glycero-3-phospho-(1'-sn-glycerol) = an S-1,2-diacyl-sn-glyceryl-L-cysteinyl-[prolipoprotein] + sn-glycerol 1-phosphate + H(+). It participates in protein modification; lipoprotein biosynthesis (diacylglyceryl transfer). In terms of biological role, catalyzes the transfer of the diacylglyceryl group from phosphatidylglycerol to the sulfhydryl group of the N-terminal cysteine of a prolipoprotein, the first step in the formation of mature lipoproteins. This is Phosphatidylglycerol--prolipoprotein diacylglyceryl transferase from Bacillus anthracis (strain A0248).